Consider the following 246-residue polypeptide: MSGAGEALAPGPVGPQRVAEAGGGQLGSTAQGKCDKDNTEKDITQATNSHFTHGEMQDQSIWGNPSDGELIRTQPQRLPQLQTSAQVPSGEEIGKIKNGHTGLSNGNGIHHGAKHGSADNRKLSAPVSQKMHRKIQSSLSVNSDISKKSKVNAVFSQKTGSSPEDCCVHCILACLFCEFLTLCNIVLGQASCGICTSEACCCCCGDEMGDDCNCPCDMDCGIMDACCESSDCLEICMECCGICFPS.

A disordered region spans residues Met1–Ile71. Positions Lys33–Ile43 are enriched in basic and acidic residues. A compositionally biased stretch (polar residues) spans Thr44–Gly63. The region spanning Gln74–Ser246 is the MDFI domain. Phosphoserine occurs at positions 128, 140, and 143.

This sequence belongs to the MDFI family. In terms of assembly, interacts with HAND1; the interaction sequesters HAND1 into the nucleolus and inhibits its activity. Interacts (via C-terminus) with ZIC2. Interacts (via C-terminus) with AXIN1, the histidine-rich region of CCNT1/cyclin-T and weakly with LEF1. Interacts with CCNT2. Interacts with GATA2. Interacts (via C-terminus) with Piezo channel composed of PIEZO1 or PIEZO2; the interaction prolongs Piezo channel inactivation. (Microbial infection) Interacts (via C-terminus) with HIV-1 Tat and Rev. Post-translationally, palmitoylated. In terms of tissue distribution, expressed in lymphatic tissues. Detected in the spleen, thymus, peripheral blood leukocytes as well as prostate, uterus and small intestine. Expressed in lymphatic endothelial cells.

It localises to the nucleus. Its subcellular location is the nucleolus. The protein resides in the cytoplasm. It is found in the secreted. In terms of biological role, required to control the activity of various transcription factors through their sequestration in the cytoplasm. Retains nuclear Zic proteins ZIC1, ZIC2 and ZIC3 in the cytoplasm and inhibits their transcriptional activation. Modulates the expression from cellular promoters. Binds to the axin complex, resulting in an increase in the level of free beta-catenin. Affects axin regulation of the WNT and JNK signaling pathways. Involved in the development of lymphatic vessel valves. Required to promote lymphatic endothelial cell migration, in a process that involves down-regulation of integrin beta 1 activation and control of cell adhesion to the extracellular matrix. Regulates the activity of mechanosensitive Piezo channel. (Microbial infection) Modulates the expression from viral promoters. Down-regulates Tat-dependent transcription of the human immunodeficiency virus type 1 (HIV-1) LTR by interacting with HIV-1 Tat and Rev and impairing their nuclear import, probably by rendering the NLS domains inaccessible to importin-beta. Also stimulates activation of human T-cell leukemia virus type I (HTLV-I) LTR. This Homo sapiens (Human) protein is MyoD family inhibitor domain-containing protein.